A 472-amino-acid polypeptide reads, in one-letter code: Methylenetetrahydrofolate--tRNA-(uracil-5-)-methyltransferase TrmFO (472 aa).

Residue 15–20 participates in FAD binding; it reads GGGLAG.

This sequence belongs to the MnmG family. TrmFO subfamily. Requires FAD as cofactor.

The protein localises to the cytoplasm. It carries out the reaction uridine(54) in tRNA + (6R)-5,10-methylene-5,6,7,8-tetrahydrofolate + NADH + H(+) = 5-methyluridine(54) in tRNA + (6S)-5,6,7,8-tetrahydrofolate + NAD(+). The catalysed reaction is uridine(54) in tRNA + (6R)-5,10-methylene-5,6,7,8-tetrahydrofolate + NADPH + H(+) = 5-methyluridine(54) in tRNA + (6S)-5,6,7,8-tetrahydrofolate + NADP(+). Its function is as follows. Catalyzes the folate-dependent formation of 5-methyl-uridine at position 54 (M-5-U54) in all tRNAs. This is Methylenetetrahydrofolate--tRNA-(uracil-5-)-methyltransferase TrmFO from Rhizobium meliloti (strain 1021) (Ensifer meliloti).